The chain runs to 337 residues: MDLDVVNMFVIAGGTLALPILAFVASFLLWPSALIRIYYWYWRRTLGMQVRYVRHEDYQFCYSFRGRPGHKPSILMLHGFSAHKDMWLSMVKFLPKNLHLVCVDMPGHEGTTRSSLDDLSIDGQVKRIHQFVECLKLNKKPFHLVGTSMGGHVAGVYAAHYPSDVCSLSLVCPAGLQYSTDNKFVQRLKELQESAAVEKIPLIPTTPKEMSEMLQLCSYVRFKVPQQILQGLVDVRIPHNTFYRKLFLEIVSEKSRYSLHQNMDKIKVPTQIIWGKQDQVLDVSGADMLAKSIANSQVELLENCGHSVVMERPRKTAKLLVDFLASVHSTDNSKKLD.

Over 1 to 19 (MDLDVVNMFVIAGGTLALP) the chain is Extracellular. A helical; Signal-anchor for type II membrane protein transmembrane segment spans residues 20 to 42 (ILAFVASFLLWPSALIRIYYWYW). Topologically, residues 43 to 337 (RRTLGMQVRY…HSTDNSKKLD (295 aa)) are cytoplasmic. An AB hydrolase-1 domain is found at 72–313 (PSILMLHGFS…CGHSVVMERP (242 aa)). S148 serves as the catalytic Nucleophile. Residues D278 and H306 each act as charge relay system in the active site.

It belongs to the AB hydrolase superfamily.

The protein resides in the late endosome membrane. It localises to the lysosome membrane. It is found in the mitochondrion membrane. It carries out the reaction Hydrolyzes glycerol monoesters of long-chain fatty acids.. It catalyses the reaction 1-octanoylglycerol + H2O = octanoate + glycerol + H(+). The catalysed reaction is 1-decanoylglycerol + H2O = decanoate + glycerol + H(+). The enzyme catalyses 1-dodecanoylglycerol + H2O = dodecanoate + glycerol + H(+). It carries out the reaction 1-tetradecanoylglycerol + H2O = tetradecanoate + glycerol + H(+). It catalyses the reaction 2-hexadecanoylglycerol + H2O = glycerol + hexadecanoate + H(+). The catalysed reaction is 2-(9Z-octadecenoyl)-glycerol + H2O = glycerol + (9Z)-octadecenoate + H(+). The enzyme catalyses 1-(9Z-octadecenoyl)-glycerol + H2O = glycerol + (9Z)-octadecenoate + H(+). It carries out the reaction 2-(9Z,12Z-octadecadienoyl)-glycerol + H2O = (9Z,12Z)-octadecadienoate + glycerol + H(+). It catalyses the reaction 2-(5Z,8Z,11Z,14Z-eicosatetraenoyl)-glycerol + H2O = glycerol + (5Z,8Z,11Z,14Z)-eicosatetraenoate + H(+). The catalysed reaction is 1-(5Z,8Z,11Z,14Z-eicosatetraenoyl)-glycerol + H2O = glycerol + (5Z,8Z,11Z,14Z)-eicosatetraenoate + H(+). The enzyme catalyses 1-(9Z,12Z-octadecadienoyl)-glycerol + H2O = (9Z,12Z)-octadecadienoate + glycerol + H(+). It carries out the reaction 3-(9Z-octadecenoyl)-sn-glycero-1-phospho-(3'-(9Z-octadecenoyl)-1'-sn-glycerol) + H2O = 3-(9Z-octadecenoyl)-sn-glycero-1-phospho-(1'-sn-glycerol) + (9Z)-octadecenoate + H(+). It catalyses the reaction (S,S)-2-(9Z-octadecenoyl)-sn-glycero-1-phospho-(2'-(9Z-octadecenoyl)-1'-sn-glycerol) + H2O = (S,S)-2-(9Z-octadecenoyl)-sn-glycero-1-phospho-(1'-sn-glycerol) + (9Z)-octadecenoate + H(+). The catalysed reaction is (R,R)-2-(9Z-octadecenoyl)-sn-glycero-3-phospho-(2'-(9Z-octadecenoyl)-3'-sn-glycerol) + H2O = (R,R)-2-(9Z-octadecenoyl)-sn-glycero-3-phospho-(3'-sn-glycerol) + (9Z)-octadecenoate + H(+). In terms of biological role, lipase that preferentially hydrolysis medium-chain saturated monoacylglycerols including 2-arachidonoylglycerol. Through 2-arachidonoylglycerol degradation may regulate endocannabinoid signaling pathways. Also has a lysophosphatidyl lipase activity with a preference for lysophosphatidylglycerol among other lysophospholipids. Also able to degrade bis(monoacylglycero)phosphate (BMP) and constitutes the major enzyme for BMP catabolism. BMP, also known as lysobisphosphatidic acid, is enriched in late endosomes and lysosomes and plays a key role in the formation of intraluminal vesicles and in lipid sorting. The sequence is that of Monoacylglycerol lipase ABHD6 from Bos taurus (Bovine).